The chain runs to 310 residues: MPIKIQSDLPAKAELEEENIFVMDENRAISQNIRPLEIIVLNLMPIKQDTELQLLRGLSNTPLQIDVTFLQMSSHVSKNTSASHIKKFYQTFEEIKNNNYDGMIITGAPVEKLDFEEVNYWDELITVMEWSNKHVTSTIHICWGAQAGLYYHYGIKKELLPKKLSGVYKHRVMNRKEPLVRGFDDVFMAPHSRYTQASRQQILDNPRLKVLADSDEAGIYIVLGDGGKEIFVMGHPEYDRLTLDQEYKRDIDKGIEPDLPVNYYPDDDCNRKPLLSWRSHANNLYTNWLNYYVYQITPYDLNESYDNYCI.

The Acyl-thioester intermediate role is filled by Cys-142. The substrate site is built by Lys-163 and Ser-192. His-235 (proton acceptor) is an active-site residue. Glu-237 is an active-site residue. Substrate is bound at residue Arg-249.

Belongs to the MetA family.

It localises to the cytoplasm. The catalysed reaction is L-homoserine + acetyl-CoA = O-acetyl-L-homoserine + CoA. It functions in the pathway amino-acid biosynthesis; L-methionine biosynthesis via de novo pathway; O-acetyl-L-homoserine from L-homoserine: step 1/1. Its function is as follows. Transfers an acetyl group from acetyl-CoA to L-homoserine, forming acetyl-L-homoserine. This chain is Homoserine O-acetyltransferase, found in Lachnospira eligens (strain ATCC 27750 / DSM 3376 / VPI C15-48 / C15-B4) (Eubacterium eligens).